The following is a 154-amino-acid chain: Protein X (154 aa).

Positions 68–117 (PCALRFTSARSMETTVNAHQVLPKVLHKRTLGLSAMSTTDLEAYFKDCLF) are mitochondrial targeting sequence.

Belongs to the orthohepadnavirus protein X family. As to quaternary structure, may form homodimer. May interact with host CEBPA, CFLAR, CREB1, DDB1, E4F1, HBXIP, HSPD1/HSP60, NFKBIA, POLR2E and SMAD4. Interacts with host SMC5-SMC6 complex and induces its degradation. Interacts with host TRPC4AP; leading to prevent ubiquitination of TRPC4AP. Interacts with host PLSCR1; this interaction promotes ubiquitination and degradation of HBx and impairs HBx-mediated cell proliferation. A fraction may be phosphorylated in insect cells and HepG2 cells, a human hepatoblastoma cell line. Phosphorylated in vitro by host protein kinase C or mitogen-activated protein kinase. N-acetylated in insect cells.

The protein localises to the host cytoplasm. It is found in the host nucleus. It localises to the host mitochondrion. In terms of biological role, multifunctional protein that plays a role in silencing host antiviral defenses and promoting viral transcription. Does not seem to be essential for HBV infection. May be directly involved in development of cirrhosis and liver cancer (hepatocellular carcinoma). Most of cytosolic activities involve modulation of cytosolic calcium. The effect on apoptosis is controversial depending on the cell types in which the studies have been conducted. May induce apoptosis by localizing in mitochondria and causing loss of mitochondrial membrane potential. May also modulate apoptosis by binding host CFLAR, a key regulator of the death-inducing signaling complex (DISC). Promotes viral transcription by using the host E3 ubiquitin ligase DDB1 to target the SMC5-SMC6 complex to proteasomal degradation. This host complex would otherwise bind to viral episomal DNA, and prevents its transcription. Moderately stimulates transcription of many different viral and cellular transcription elements. Promoters and enhancers stimulated by HBx contain DNA binding sites for NF-kappa-B, AP-1, AP-2, c-EBP, ATF/CREB, or the calcium-activated factor NF-AT. This Homo sapiens (Human) protein is Protein X.